A 57-amino-acid polypeptide reads, in one-letter code: UPF0391 membrane protein Xaut_1725 (57 aa).

Helical transmembrane passes span 4–24 (WAVT…GGIA) and 30–50 (IAKI…VAGL).

The protein belongs to the UPF0391 family.

It is found in the cell membrane. The sequence is that of UPF0391 membrane protein Xaut_1725 from Xanthobacter autotrophicus (strain ATCC BAA-1158 / Py2).